Reading from the N-terminus, the 183-residue chain is Probable chemoreceptor glutamine deamidase CheD (183 aa).

The protein belongs to the CheD family.

The catalysed reaction is L-glutaminyl-[protein] + H2O = L-glutamyl-[protein] + NH4(+). In terms of biological role, probably deamidates glutamine residues to glutamate on methyl-accepting chemotaxis receptors (MCPs), playing an important role in chemotaxis. This Sinorhizobium medicae (strain WSM419) (Ensifer medicae) protein is Probable chemoreceptor glutamine deamidase CheD.